Here is a 138-residue protein sequence, read N- to C-terminus: Succinate dehydrogenase assembly factor 4, mitochondrial (138 aa).

The N-terminal 32 residues, 1–32 (MLCAIKSTGYRYPRTGALNLLRGRPFNMATRK), are a transit peptide targeting the mitochondrion. A compositionally biased stretch (polar residues) spans 71 to 98 (QATGDRTKESLNSPLLTKNDIGSFSPEF). Residues 71–138 (QATGDRTKES…YSFNGRVTDF (68 aa)) are disordered.

Belongs to the SDHAF4 family. Interacts with SDH1 in its FAD-bound form.

The protein localises to the mitochondrion matrix. Its function is as follows. Plays an essential role in the assembly of succinate dehydrogenase (SDH), an enzyme complex (also referred to as respiratory complex II) that is a component of both the tricarboxylic acid (TCA) cycle and the mitochondrial electron transport chain, and which couples the oxidation of succinate to fumarate with the reduction of ubiquinone (coenzyme Q) to ubiquinol. Binds to the flavoprotein subunit SDH1 in its FAD-bound form, blocking the generation of excess reactive oxygen species (ROS) and facilitating its assembly with the iron-sulfur protein subunit SDH2 into the SDH catalytic dimer. In Saccharomyces cerevisiae (strain ATCC 204508 / S288c) (Baker's yeast), this protein is Succinate dehydrogenase assembly factor 4, mitochondrial.